Consider the following 404-residue polypeptide: Probable tRNA sulfurtransferase (404 aa).

Positions 60–165 constitute a THUMP domain; the sequence is TAVAESLKQV…EEAAYLSYET (106 aa). Residues 183-184, 208-209, R265, G287, and Q296 contribute to the ATP site; these read ML and HF.

It belongs to the ThiI family.

The protein localises to the cytoplasm. The catalysed reaction is [ThiI sulfur-carrier protein]-S-sulfanyl-L-cysteine + a uridine in tRNA + 2 reduced [2Fe-2S]-[ferredoxin] + ATP + H(+) = [ThiI sulfur-carrier protein]-L-cysteine + a 4-thiouridine in tRNA + 2 oxidized [2Fe-2S]-[ferredoxin] + AMP + diphosphate. It catalyses the reaction [ThiS sulfur-carrier protein]-C-terminal Gly-Gly-AMP + S-sulfanyl-L-cysteinyl-[cysteine desulfurase] + AH2 = [ThiS sulfur-carrier protein]-C-terminal-Gly-aminoethanethioate + L-cysteinyl-[cysteine desulfurase] + A + AMP + 2 H(+). It participates in cofactor biosynthesis; thiamine diphosphate biosynthesis. Functionally, catalyzes the ATP-dependent transfer of a sulfur to tRNA to produce 4-thiouridine in position 8 of tRNAs, which functions as a near-UV photosensor. Also catalyzes the transfer of sulfur to the sulfur carrier protein ThiS, forming ThiS-thiocarboxylate. This is a step in the synthesis of thiazole, in the thiamine biosynthesis pathway. The sulfur is donated as persulfide by IscS. This is Probable tRNA sulfurtransferase from Streptococcus pneumoniae (strain ATCC 700669 / Spain 23F-1).